Reading from the N-terminus, the 210-residue chain is Protein-methionine-sulfoxide reductase heme-binding subunit MsrQ (210 aa).

A run of 4 helical transmembrane segments spans residues 15 to 35 (DTLV…WLAW), 89 to 109 (LFAF…DLFF), 122 to 142 (PFIT…VTST), and 160 to 180 (LVYL…KADH).

The protein belongs to the MsrQ family. Heterodimer of a catalytic subunit (MsrP) and a heme-binding subunit (MsrQ). It depends on FMN as a cofactor. Requires heme b as cofactor.

The protein resides in the cell inner membrane. In terms of biological role, part of the MsrPQ system that repairs oxidized periplasmic proteins containing methionine sulfoxide residues (Met-O), using respiratory chain electrons. Thus protects these proteins from oxidative-stress damage caused by reactive species of oxygen and chlorine generated by the host defense mechanisms. MsrPQ is essential for the maintenance of envelope integrity under bleach stress, rescuing a wide series of structurally unrelated periplasmic proteins from methionine oxidation. MsrQ provides electrons for reduction to the reductase catalytic subunit MsrP, using the quinone pool of the respiratory chain. This Caulobacter vibrioides (strain ATCC 19089 / CIP 103742 / CB 15) (Caulobacter crescentus) protein is Protein-methionine-sulfoxide reductase heme-binding subunit MsrQ.